The chain runs to 440 residues: 3-phosphoshikimate 1-carboxyvinyltransferase (440 aa).

3-phosphoshikimate contacts are provided by K25, S26, and R30. K25 provides a ligand contact to phosphoenolpyruvate. Phosphoenolpyruvate contacts are provided by G96 and R124. The 3-phosphoshikimate site is built by S168, Q169, D310, and K337. Residue Q169 participates in phosphoenolpyruvate binding. The active-site Proton acceptor is the D310. Positions 341, 382, and 409 each coordinate phosphoenolpyruvate.

This sequence belongs to the EPSP synthase family. In terms of assembly, monomer.

The protein resides in the cytoplasm. It carries out the reaction 3-phosphoshikimate + phosphoenolpyruvate = 5-O-(1-carboxyvinyl)-3-phosphoshikimate + phosphate. It functions in the pathway metabolic intermediate biosynthesis; chorismate biosynthesis; chorismate from D-erythrose 4-phosphate and phosphoenolpyruvate: step 6/7. Catalyzes the transfer of the enolpyruvyl moiety of phosphoenolpyruvate (PEP) to the 5-hydroxyl of shikimate-3-phosphate (S3P) to produce enolpyruvyl shikimate-3-phosphate and inorganic phosphate. The polypeptide is 3-phosphoshikimate 1-carboxyvinyltransferase (Chlamydia trachomatis serovar D (strain ATCC VR-885 / DSM 19411 / UW-3/Cx)).